Consider the following 373-residue polypeptide: Glutamate 5-kinase (373 aa).

Residue K15 participates in ATP binding. Positions 55, 142, and 154 each coordinate substrate. ATP contacts are provided by residues 174–175 (TD) and 216–222 (TGGMVTK). The 79-residue stretch at 281-359 (SGRVIVDDGA…GEIEAILGYK (79 aa)) folds into the PUA domain.

The protein belongs to the glutamate 5-kinase family.

The protein resides in the cytoplasm. It carries out the reaction L-glutamate + ATP = L-glutamyl 5-phosphate + ADP. It functions in the pathway amino-acid biosynthesis; L-proline biosynthesis; L-glutamate 5-semialdehyde from L-glutamate: step 1/2. Functionally, catalyzes the transfer of a phosphate group to glutamate to form L-glutamate 5-phosphate. This is Glutamate 5-kinase from Geobacter metallireducens (strain ATCC 53774 / DSM 7210 / GS-15).